The sequence spans 977 residues: Structural protein ORF43 (977 aa).

A disordered region spans residues 531-556 (DNDNINKQQQQQRERNDDDDDDDDST).

This sequence belongs to the ascovirus HvAV ORF146 family.

Its subcellular location is the virion. The polypeptide is Structural protein ORF43 (Noctuidae (owlet moths)).